Here is a 428-residue protein sequence, read N- to C-terminus: Pyruvate dehydrogenase E1 component subunit alpha-3, chloroplastic (428 aa).

The transit peptide at 1 to 61 (MATAFAPTKL…NATRRSPVVS (61 aa)) directs the protein to the chloroplast. Pyruvate-binding residues include H115, Y141, R142, A190, I192, D227, G228, and N256. Thiamine diphosphate contacts are provided by Y141, R142, A190, I192, D227, G228, N256, and H325. Residue D227 participates in Mg(2+) binding. N256 contributes to the Mg(2+) binding site.

Tetramer of 2 alpha and 2 beta subunits. It depends on thiamine diphosphate as a cofactor. Mg(2+) is required as a cofactor.

It localises to the plastid. The protein resides in the chloroplast. The enzyme catalyses N(6)-[(R)-lipoyl]-L-lysyl-[protein] + pyruvate + H(+) = N(6)-[(R)-S(8)-acetyldihydrolipoyl]-L-lysyl-[protein] + CO2. In terms of biological role, the pyruvate dehydrogenase complex catalyzes the overall conversion of pyruvate to acetyl-CoA and CO(2). It contains multiple copies of three enzymatic components: pyruvate dehydrogenase (E1), dihydrolipoamide acetyltransferase (E2) and lipoamide dehydrogenase (E3). This is Pyruvate dehydrogenase E1 component subunit alpha-3, chloroplastic (PDH-E1 ALPHA) from Arabidopsis thaliana (Mouse-ear cress).